We begin with the raw amino-acid sequence, 177 residues long: Large ribosomal subunit protein uL10 (177 aa).

Belongs to the universal ribosomal protein uL10 family. In terms of assembly, part of the ribosomal stalk of the 50S ribosomal subunit. The N-terminus interacts with L11 and the large rRNA to form the base of the stalk. The C-terminus forms an elongated spine to which L12 dimers bind in a sequential fashion forming a multimeric L10(L12)X complex.

In terms of biological role, forms part of the ribosomal stalk, playing a central role in the interaction of the ribosome with GTP-bound translation factors. The polypeptide is Large ribosomal subunit protein uL10 (Kocuria rhizophila (strain ATCC 9341 / DSM 348 / NBRC 103217 / DC2201)).